Reading from the N-terminus, the 195-residue chain is Small ribosomal subunit protein uS5 (195 aa).

The tract at residues 1–20 (MAREREGGGRGRREDREERD) is disordered. In terms of domain architecture, S5 DRBM spans 23 to 86 (FVDKLVHINR…EAAKRGLIRV (64 aa)). A disordered region spans residues 161-195 (DSPRSVAARRGIKVSTLQSRRRDADPADQSEAAVA).

Belongs to the universal ribosomal protein uS5 family. In terms of assembly, part of the 30S ribosomal subunit. Contacts proteins S4 and S8.

Its function is as follows. With S4 and S12 plays an important role in translational accuracy. Functionally, located at the back of the 30S subunit body where it stabilizes the conformation of the head with respect to the body. The sequence is that of Small ribosomal subunit protein uS5 from Methylobacterium radiotolerans (strain ATCC 27329 / DSM 1819 / JCM 2831 / NBRC 15690 / NCIMB 10815 / 0-1).